The primary structure comprises 1085 residues: Protein IFH1 (1085 aa).

Disordered stretches follow at residues 1–251 (MAGK…QQAL), 283–302 (KNKE…VMLG), 457–493 (SKLK…TSNV), 507–622 (DDEN…DSSV), 676–700 (VDDE…IGSK), and 747–774 (QLRE…GDEL). Polar residues-rich tracts occupy residues 9–18 (KSTINHSTHS) and 39–48 (RQSPPTLSTT). Residues 54 to 66 (SLIYSSESSLSDV) show a composition bias toward low complexity. Over residues 76 to 85 (NPHKIKRKAK) the composition is skewed to basic residues. Residues 120-165 (DGEESENEEEESEEEEEDDDEDDDDDDDDGSDSDSDSETSSDDENI) show a composition bias toward acidic residues. Residues 184 to 197 (AMNTNSNTLYSSRE) show a composition bias toward polar residues. Phosphoserine is present on S208. The segment covering 209–239 (PKKENEEEQKEEKEKEKEEQQKQQESNKKEV) has biased composition (basic and acidic residues). Residues 241–251 (GSGTTTTQQAL) are compositionally biased toward polar residues. Positions 283–297 (KNKENNGNEEDKLDS) are enriched in basic and acidic residues. The span at 474–483 (QRRKLYKKTQ) shows a compositional bias: basic residues. The span at 484–493 (KPSTRTTSNV) shows a compositional bias: polar residues. The span at 513–524 (HKSKKGRHKSGK) shows a compositional bias: basic residues. A compositionally biased stretch (polar residues) spans 546–557 (STHSTVLNSGKY). A compositionally biased stretch (basic and acidic residues) spans 584 to 599 (ETSHDADTDEELRALD). Acidic residues-rich tracts occupy residues 607-620 (TELD…DDDS) and 676-686 (VDDESTDEDDN). Residues 747–764 (QLREQHQRAQTPDVKREG) are compositionally biased toward basic and acidic residues. S1041 carries the post-translational modification Phosphoserine.

The protein belongs to the IFH1 family.

It is found in the nucleus. Functionally, transcriptional coactivator that together with FHL1 regulates the expression of rRNA and ribosomal protein genes. Its activity is negatively regulated by environmental stress. The protein is Protein IFH1 (IFH1) of Saccharomyces cerevisiae (strain ATCC 204508 / S288c) (Baker's yeast).